Reading from the N-terminus, the 69-residue chain is M-poneratoxin-Dq4e (69 aa).

The first 25 residues, 1–25, serve as a signal peptide directing secretion; the sequence is MKLSAFTLAFALILMMAIMYNMAEA. Positions 26–39 are excised as a propeptide; that stretch reads AALADADADAEAIA.

In terms of tissue distribution, expressed by the venom gland.

It is found in the secreted. May have antimicrobial properties, like most ant linear peptides. In addition, when tested in vitro on the parasite Trypanosoma cruzi (responsible of the Chagas disease), is able to moderately reduce the number of the three forms (epimastigote, trypomastigote and amastigote) by inducing cell death through necrosis. This chain is M-poneratoxin-Dq4e, found in Dinoponera quadriceps (South American ant).